The primary structure comprises 454 residues: Notoamide E oxidase notB (454 aa).

Residues 15 to 35 (SPAELTVIIVGLGIAGLTAAI) form a helical membrane-spanning segment. Glu48 and Gly61 together coordinate FAD. Residue Asn75 is glycosylated (N-linked (GlcNAc...) asparagine). Arg121 contributes to the FAD binding site. Catalysis depends on residues Arg199 and Tyr229. Positions 322 and 335 each coordinate FAD.

This sequence belongs to the paxM FAD-dependent monooxygenase family. Requires FAD as cofactor.

It is found in the membrane. The enzyme catalyses notoamide E + NADPH + O2 + H(+) = notoamide C + NADP(+) + H2O. It catalyses the reaction notoamide E + NADPH + O2 + H(+) = notoamide D + NADP(+) + H2O. It participates in alkaloid biosynthesis. Its function is as follows. FAD-dependent monooxygenase; part of the gene cluster that mediates the biosynthesis of notoamide, a fungal indole alkaloid that belongs to a family of natural products containing a characteristic bicyclo[2.2.2]diazaoctane core. The first step of notoamide biosynthesis involves coupling of L-proline and L-tryptophan by the bimodular NRPS notE, to produce cyclo-L-tryptophan-L-proline called brevianamide F. The reverse prenyltransferase notF then acts as a deoxybrevianamide E synthase and converts brevianamide F to deoxybrevianamide E via reverse prenylation at C-2 of the indole ring leading to the bicyclo[2.2.2]diazaoctane core. Deoxybrevianamide E is further hydroxylated at C-6 of the indole ring, likely catalyzed by the cytochrome P450 monooxygenase notG, to yield 6-hydroxy-deoxybrevianamide E. 6-hydroxy-deoxybrevianamide E is a specific substrate of the prenyltransferase notC for normal prenylation at C-7 to produce 6-hydroxy-7-prenyl-deoxybrevianamide, also called notoamide S. As the proposed pivotal branching point in notoamide biosynthesis, notoamide S can be diverted to notoamide E through an oxidative pyran ring closure putatively catalyzed by either notH cytochrome P450 monooxygenase or the notD FAD-linked oxidoreductase. This step would be followed by an indole 2,3-epoxidation-initiated pinacol-like rearrangement catalyzed by the notB FAD-dependent monooxygenase leading to the formation of notoamide C and notoamide D. On the other hand notoamide S is converted to notoamide T by notH (or notD), a bifunctional oxidase that also functions as the intramolecular Diels-Alderase responsible for generation of (+)-notoamide T. To generate antipodal (-)-notoaminide T, notH' (or notD') in Aspergillus versicolor is expected to catalyze a Diels-Alder reaction leading to the opposite stereochemistry. The remaining oxidoreductase notD (or notH) likely catalyzes the oxidative pyran ring formation to yield (+)-stephacidin A. The FAD-dependent monooxygenase notI is highly similar to notB and is predicted to catalyze a similar conversion from (+)-stephacidin A to (-)-notoamide B via the 2,3-epoxidation of (+)-stephacidin A followed by a pinacol-type rearrangement. Finally, it remains unclear which enzyme could be responsible for the final hydroxylation steps leading to notoamide A and sclerotiamide. In Aspergillus sp. (strain MF297-2), this protein is Notoamide E oxidase notB.